The following is a 324-amino-acid chain: D-alanine--D-alanine ligase (324 aa).

Residues 116–311 (KQVWHTLGIP…FQQLVLAILA (196 aa)) enclose the ATP-grasp domain. 142–197 (ATELGFPLIVKPAHEGSSIGMAKVSSASELIDAWKAASTYDSQVLVEQWIHGPEFT) provides a ligand contact to ATP. Residues aspartate 265, glutamate 278, and asparagine 280 each contribute to the Mg(2+) site.

This sequence belongs to the D-alanine--D-alanine ligase family. It depends on Mg(2+) as a cofactor. Requires Mn(2+) as cofactor.

It is found in the cytoplasm. It carries out the reaction 2 D-alanine + ATP = D-alanyl-D-alanine + ADP + phosphate + H(+). It functions in the pathway cell wall biogenesis; peptidoglycan biosynthesis. Its function is as follows. Cell wall formation. This is D-alanine--D-alanine ligase from Pseudomonas fluorescens (strain Pf0-1).